Here is a 260-residue protein sequence, read N- to C-terminus: Deoxycytidine kinase (260 aa).

Residues serine 11 and serine 15 each carry the phosphoserine; by CK1 modification. 28–36 (GNIAAGKST) contacts ATP. Glutamate 53 is a substrate binding site. Threonine 72 is modified (phosphothreonine; by CK1). Serine 74 carries the post-translational modification Phosphoserine; by CK1. Positions 86 and 97 each coordinate substrate. Catalysis depends on glutamate 127, which acts as the Proton acceptor. Substrate is bound by residues arginine 128 and aspartate 133. 188–192 (RIYLR) serves as a coordination point for ATP. Glutamate 197 provides a ligand contact to substrate. Residue 240 to 242 (EDF) participates in ATP binding.

This sequence belongs to the DCK/DGK family. Homodimer. Phosphorylated and activated in vitro upon phosphorylation at Ser-74 by CSNK1D/CK1.

The protein localises to the nucleus. It carries out the reaction 2'-deoxycytidine + a ribonucleoside 5'-triphosphate = dCMP + a ribonucleoside 5'-diphosphate + H(+). The enzyme catalyses 2'-deoxyadenosine + ATP = dAMP + ADP + H(+). It catalyses the reaction 2'-deoxyguanosine + ATP = dGMP + ADP + H(+). Functionally, phosphorylates the deoxyribonucleosides deoxycytidine, deoxyguanosine and deoxyadenosine. The chain is Deoxycytidine kinase (DCK) from Bos taurus (Bovine).